The sequence spans 357 residues: Velvet complex subunit 2 (357 aa).

Positions 32–341 (RRAERKYKLE…AQQGIKIPIR (310 aa)) constitute a Velvet domain.

The protein belongs to the velvet family. VelB subfamily. As to quaternary structure, component of the heterotrimeric velvet complex composed of LAE1, VEL1 and VEL2; VEL1A acting as a bridging protein between LAE1 and VEL2. Forms a heterodimeric complex with VOS1; the formation of the VEL2-VOS1 complex is light-dependent.

It is found in the nucleus. The protein resides in the cytoplasm. Functionally, component of the velvet transcription factor complex that controls sexual/asexual developmental ratio in response to light, promoting sexual development in the darkness while stimulating asexual sporulation under illumination. The velvet complex acts as a global regulator for secondary metabolite gene expression. Component of the VEL2-VOS1 heterodimeric complex that plays a dual role in activating genes associated with spore maturation and repressing certain development-associated genes. The complex binds DNA through the DNA-binding domain of VOS1 that recognizes an 11-nucleotide consensus sequence 5'-CTGGCCGCGGC-3' consisting of two motifs in the promoters of key developmental regulatory genes. The VEL2-VOS1 complex is required for normal pseudothecium development and regulates asexual spore compartmentalization, pigmentation and germination. In Cochliobolus heterostrophus (strain C5 / ATCC 48332 / race O) (Southern corn leaf blight fungus), this protein is Velvet complex subunit 2.